The primary structure comprises 82 residues: Small ribosomal subunit protein bS16 (82 aa).

Belongs to the bacterial ribosomal protein bS16 family.

The protein is Small ribosomal subunit protein bS16 of Marinomonas sp. (strain MWYL1).